Here is a 266-residue protein sequence, read N- to C-terminus: Decarboxylase tropJ (266 aa).

Glu80 functions as the Proton acceptor in the catalytic mechanism. Residues Glu80, His99, His101, and His180 each contribute to the Zn(2+) site.

This sequence belongs to the aldolase class II family. It depends on Zn(2+) as a cofactor.

The protein operates within secondary metabolite biosynthesis. Functionally, decarboxylase; part of the gene cluster that mediates the biosynthesis of the tropolone class of fungal maleic anhydrides. The pathway begins with the synthesis of 3-methylorcinaldehyde by the non-reducing polyketide synthase (PKS) tropA. 3-methylorcinaldehyde is the substrate for the FAD-dependent monooxygenase tropB to yield a dearomatized hydroxycyclohexadione. The 2-oxoglutarate-dependent dioxygenase tropC then performs the oxidative ring expansion to provide the first tropolone metabolite stipitaldehyde. Trop D converts stipitaldehyde into stipitacetal which is in turn converted to stipitalide by the short-chain dehydrogenase/reductase tropE. The next steps involve tropF, tropG, tropH, tropI and tropJ to form successive tropolone maleic anhydrides including stipitaldehydic, stipitatonic and stipitatic acids. The protein is Decarboxylase tropJ of Talaromyces stipitatus (strain ATCC 10500 / CBS 375.48 / QM 6759 / NRRL 1006) (Penicillium stipitatum).